Consider the following 83-residue polypeptide: SPbeta prophage-derived uncharacterized protein YopE (83 aa).

Helical transmembrane passes span 5–25 (AYFL…FIFV) and 60–80 (VIAF…TKLF).

It localises to the cell membrane. The sequence is that of SPbeta prophage-derived uncharacterized protein YopE (yopE) from Bacillus subtilis (strain 168).